Reading from the N-terminus, the 161-residue chain is Cyclic pyranopterin monophosphate synthase (161 aa).

Substrate contacts are provided by residues 75-77 and 113-114; these read LCH and ME. Asp128 is a catalytic residue.

It belongs to the MoaC family. In terms of assembly, homohexamer; trimer of dimers.

The catalysed reaction is (8S)-3',8-cyclo-7,8-dihydroguanosine 5'-triphosphate = cyclic pyranopterin phosphate + diphosphate. It functions in the pathway cofactor biosynthesis; molybdopterin biosynthesis. In terms of biological role, catalyzes the conversion of (8S)-3',8-cyclo-7,8-dihydroguanosine 5'-triphosphate to cyclic pyranopterin monophosphate (cPMP). This is Cyclic pyranopterin monophosphate synthase from Cupriavidus pinatubonensis (strain JMP 134 / LMG 1197) (Cupriavidus necator (strain JMP 134)).